We begin with the raw amino-acid sequence, 208 residues long: Uracil phosphoribosyltransferase (208 aa).

5-phospho-alpha-D-ribose 1-diphosphate contacts are provided by residues R78, R103, and 130–138 (DPMLATGGS). Residues I193 and 198 to 200 (GDA) each bind uracil. 5-phospho-alpha-D-ribose 1-diphosphate is bound at residue D199.

The protein belongs to the UPRTase family. Mg(2+) serves as cofactor.

The enzyme catalyses UMP + diphosphate = 5-phospho-alpha-D-ribose 1-diphosphate + uracil. It participates in pyrimidine metabolism; UMP biosynthesis via salvage pathway; UMP from uracil: step 1/1. Its activity is regulated as follows. Allosterically activated by GTP. Functionally, catalyzes the conversion of uracil and 5-phospho-alpha-D-ribose 1-diphosphate (PRPP) to UMP and diphosphate. The protein is Uracil phosphoribosyltransferase of Photobacterium profundum (strain SS9).